Here is a 1564-residue protein sequence, read N- to C-terminus: ATP-dependent permease PDR10 (1564 aa).

A compositionally biased stretch (polar residues) spans 1–16 (MLQAPSSSNSGLNQGN). The disordered stretch occupies residues 1-37 (MLQAPSSSNSGLNQGNAAPDGPPNETQPYEGLDAAAQ). Residues 1–587 (MLQAPSSSNS…AAIFFAILFN (587 aa)) are Cytoplasmic-facing. Residues 174–430 (ISRRLFHRTH…FQRMGYVCPE (257 aa)) enclose the ABC transporter 1 domain. The next 5 membrane-spanning stretches (helical) occupy residues 588-608 (AFSSLLEIFSLYETRPITEKH), 624-644 (TFSDVPTKLATAVTFNIPYYF), 674-694 (RCIGSVSKTLPQAMVPASVLL), 699-719 (MYTGFAIPRVQMLGWSKWISY), and 732-752 (INEFHGRNFPCAQYIPSGPNY). N-linked (GlcNAc...) asparagine glycosylation occurs at asparagine 754. The span at 839–849 (KGIVSEKKKKN) shows a compositional bias: basic residues. The segment at 839-872 (KGIVSEKKKKNQPTLSTSDAEKDVEMNNNSSATD) is disordered. A helical membrane pass occupies residues 841-861 (IVSEKKKKNQPTLSTSDAEKD). Over 862-1304 (VEMNNNSSAT…IFMFTVVFNP (443 aa)) the chain is Cytoplasmic. The 244-residue stretch at 923–1166 (FHWKNLCYDI…MINYFEAHGA (244 aa)) folds into the ABC transporter 2 domain. ATP is bound at residue 959–966 (GASGAGKT). The next 6 membrane-spanning stretches (helical) occupy residues 1305-1325 (ILQQYLPLFVQQRELYEARER), 1340-1360 (ILVEIPWNLLAGTIAFFVYYY), 1390-1410 (VYISSMGVLVISCIEIAENAA), 1426-1446 (VLATPNILPRFWIFMYRVSPL), 1459-1479 (ANASVVCSSNELLKIVPPSGM), and 1491-1511 (STGTGYLLDGSSETECHFCQF). At 1512–1564 (SSTNDYLATVSSSYSRRWMNYGIFSAYIVFDYCAAIFLYWLVRVPKKSKKLKK) the chain is on the cytoplasmic side.

This sequence belongs to the ABC transporter superfamily. ABCG family. PDR (TC 3.A.1.205) subfamily.

The protein resides in the membrane. This Saccharomyces cerevisiae (strain ATCC 204508 / S288c) (Baker's yeast) protein is ATP-dependent permease PDR10 (PDR10).